The following is a 235-amino-acid chain: Small ribosomal subunit protein uS2c (235 aa).

This sequence belongs to the universal ribosomal protein uS2 family.

It is found in the plastid. It localises to the chloroplast. This Anthoceros angustus (Hornwort) protein is Small ribosomal subunit protein uS2c (rps2).